Here is a 199-residue protein sequence, read N- to C-terminus: Protein PPP1R35 homolog (199 aa).

The segment covering methionine 1 to alanine 11 has biased composition (basic residues). Disordered regions lie at residues methionine 1 to valine 23 and glutamate 36 to asparagine 60. Residues cysteine 38 to aspartate 49 show a composition bias toward polar residues.

This sequence belongs to the PPP1R35 family. Interacts with Ana3; this complex is recruited to daughter centrioles before their conversion to centrosomes.

Its subcellular location is the cytoplasm. It localises to the cytoskeleton. The protein resides in the microtubule organizing center. It is found in the centrosome. The protein localises to the centriole. Its function is as follows. Participates in the later stages of centriole assembly through the interaction with Ana3 leading to the centriole to centrosome conversion in somatic cells. The polypeptide is Protein PPP1R35 homolog (Drosophila melanogaster (Fruit fly)).